We begin with the raw amino-acid sequence, 236 residues long: MSQEWKEYAKRVLDEWEPKTKLGMMVKEGQITDIHEIFRRGYQIKEPEIIDVLLPEVNARENQEVLDIALTVRMTDSGRRVRFRVLAAVGNRDGYVGLGIGHGKEVGIAIRKAINYAKLNIIEIKRGCGSWECRCRRPHSVPFAVEGKEGSVRVRLIPGPRGLGLVIGDVGKKILRLAGVQDVWSQTFGETRTTVNFAKAVFNALYNTNRVAISPEMIERYGIVVGRAMPTTFTLE.

Residues 61 to 124 (ENQEVLDIAL…NYAKLNIIEI (64 aa)) form the S5 DRBM domain.

Belongs to the universal ribosomal protein uS5 family. Part of the 30S ribosomal subunit. Contacts protein S4.

Functionally, with S4 and S12 plays an important role in translational accuracy. The sequence is that of Small ribosomal subunit protein uS5 from Pyrococcus furiosus (strain ATCC 43587 / DSM 3638 / JCM 8422 / Vc1).